The following is a 380-amino-acid chain: Chaperone protein DnaJ (380 aa).

The 66-residue stretch at 5-70 (DYYEVLGVSK…QKRQTYDQYG (66 aa)) folds into the J domain. A CR-type zinc finger spans residues 136-214 (GKEVEIKIPT…CHGQGRVEKT (79 aa)). Cysteine 149, cysteine 152, cysteine 166, cysteine 169, cysteine 188, cysteine 191, cysteine 202, and cysteine 205 together coordinate Zn(2+). CXXCXGXG motif repeat units follow at residues 149–156 (CDPCDGSG), 166–173 (CTTCHGAG), 188–195 (CPTCQGQG), and 202–209 (CDSCHGQG).

The protein belongs to the DnaJ family. Homodimer. Zn(2+) is required as a cofactor.

The protein resides in the cytoplasm. Its function is as follows. Participates actively in the response to hyperosmotic and heat shock by preventing the aggregation of stress-denatured proteins and by disaggregating proteins, also in an autonomous, DnaK-independent fashion. Unfolded proteins bind initially to DnaJ; upon interaction with the DnaJ-bound protein, DnaK hydrolyzes its bound ATP, resulting in the formation of a stable complex. GrpE releases ADP from DnaK; ATP binding to DnaK triggers the release of the substrate protein, thus completing the reaction cycle. Several rounds of ATP-dependent interactions between DnaJ, DnaK and GrpE are required for fully efficient folding. Also involved, together with DnaK and GrpE, in the DNA replication of plasmids through activation of initiation proteins. This chain is Chaperone protein DnaJ, found in Pseudoalteromonas translucida (strain TAC 125).